Consider the following 416-residue polypeptide: Mitochondrial inner membrane i-AAA protease complex subunit MGR1 (416 aa).

Residues 1-28 (MAVFTPPSGNSNSTDHTHTQDDHDKDDN) form a disordered region. The Mitochondrial intermembrane portion of the chain corresponds to 1–56 (MAVFTPPSGNSNSTDHTHTQDDHDKDDNDIKKFYIRPSLGLKLWGPLVPAPDNLPG). The segment covering 15–28 (DHTHTQDDHDKDDN) has biased composition (basic and acidic residues). A helical membrane pass occupies residues 57-73 (LYTLITIQSAVGFFALW). The Mitochondrial matrix segment spans residues 74 to 151 (RLRRLYKLPP…RQSRFVSVRK (78 aa)). The helical transmembrane segment at 152–169 (LLWGLFGSLLLSQSLLEL) threads the bilayer. At 170-416 (TRLNFLKYDP…PKALTNEKTH (247 aa)) the chain is on the mitochondrial intermembrane side. The span at 390–400 (SHTKTPTSTDQ) shows a compositional bias: polar residues. The segment at 390–416 (SHTKTPTSTDQPLPGPTPKALTNEKTH) is disordered.

Belongs to the MGR1 family. In terms of assembly, component of the mitochondrial inner membrane i-AAA protease complex composed of at least MRG1 and YME1. Interacts directly with YME1.

Its subcellular location is the mitochondrion inner membrane. In terms of biological role, component of the mitochondrial inner membrane i-AAA protease complex required for mitochondrial inner membrane protein turnover. Required for growth of cells lacking the mitochondrial genome. The sequence is that of Mitochondrial inner membrane i-AAA protease complex subunit MGR1 (MGR1) from Saccharomyces cerevisiae (strain YJM789) (Baker's yeast).